The primary structure comprises 194 residues: Ribosomal RNA large subunit methyltransferase E (194 aa).

S-adenosyl-L-methionine contacts are provided by Gly-48, Trp-50, Asp-66, Asn-82, and Asp-110. Residue Lys-150 is the Proton acceptor of the active site.

This sequence belongs to the class I-like SAM-binding methyltransferase superfamily. RNA methyltransferase RlmE family.

Its subcellular location is the cytoplasm. It carries out the reaction uridine(2552) in 23S rRNA + S-adenosyl-L-methionine = 2'-O-methyluridine(2552) in 23S rRNA + S-adenosyl-L-homocysteine + H(+). Its function is as follows. Specifically methylates the uridine in position 2552 of 23S rRNA at the 2'-O position of the ribose in the fully assembled 50S ribosomal subunit. This is Ribosomal RNA large subunit methyltransferase E from Picrophilus torridus (strain ATCC 700027 / DSM 9790 / JCM 10055 / NBRC 100828 / KAW 2/3).